A 278-amino-acid chain; its full sequence is Putative transcription factor kapC (278 aa).

Positions Met1 to His10 are enriched in pro residues. Residues Met1 to Arg121 form a disordered region. Polar residues predominate over residues Pro56–Ile68. In terms of domain architecture, bZIP spans Pro103 to Leu166. The segment at Leu104–Tyr127 is basic motif. Residues Arg109–Ala119 are compositionally biased toward low complexity. Residues Leu131 to Leu162 are leucine-zipper. Residues Val173–Ser278 are disordered. Positions Pro198–Gln214 are enriched in low complexity. Positions Val215–Asn226 are enriched in polar residues. A compositionally biased stretch (basic and acidic residues) spans Gly254–Pro269.

The protein belongs to the bZIP family.

It localises to the nucleus. Putative transcription factor. This is Putative transcription factor kapC (kapC) from Emericella nidulans (strain FGSC A4 / ATCC 38163 / CBS 112.46 / NRRL 194 / M139) (Aspergillus nidulans).